Here is an 85-residue protein sequence, read N- to C-terminus: Large ribosomal subunit protein bL27 (85 aa).

The segment at 1 to 20 (MAHKKGGGTTRNGRDSESKR) is disordered.

The protein belongs to the bacterial ribosomal protein bL27 family.

The chain is Large ribosomal subunit protein bL27 from Herminiimonas arsenicoxydans.